Reading from the N-terminus, the 137-residue chain is Transcription antitermination protein NusB (137 aa).

The protein belongs to the NusB family.

Involved in transcription antitermination. Required for transcription of ribosomal RNA (rRNA) genes. Binds specifically to the boxA antiterminator sequence of the ribosomal RNA (rrn) operons. This chain is Transcription antitermination protein NusB, found in Borreliella afzelii (strain PKo) (Borrelia afzelii).